The chain runs to 392 residues: p21-activated protein kinase-interacting protein 1 (392 aa).

WD repeat units follow at residues 40–77 (AHTA…DHGA), 80–118 (HHNG…CLKS), 121–160 (AHKG…SAFI), 202–240 (TNER…CLSE), and 243–284 (AHEN…KVSP). A disordered region spans residues 309–392 (TKESPPAAAE…RKKKKIRMMQ (84 aa)). Basic and acidic residues predominate over residues 325–351 (EQSRRNKEESGHAVQEEEKQPKPDTEK). Polar residues predominate over residues 355–368 (TGDSNKPTRGNSLV). The segment covering 381–392 (KKRKKKKIRMMQ) has biased composition (basic residues).

In terms of assembly, interacts with PAK1.

It is found in the nucleus. The protein resides in the nucleolus. Its function is as follows. Negatively regulates the PAK1 kinase. PAK1 is a member of the PAK kinase family, which has been shown to play a positive role in the regulation of signaling pathways involving MAPK8 and RELA. PAK1 exists as an inactive homodimer, which is activated by binding of small GTPases such as CDC42 to an N-terminal regulatory domain. PAK1IP1 also binds to the N-terminus of PAK1, and inhibits the specific activation of PAK1 by CDC42. May be involved in ribosomal large subunit assembly. The sequence is that of p21-activated protein kinase-interacting protein 1 (PAK1IP1) from Bos taurus (Bovine).